We begin with the raw amino-acid sequence, 106 residues long: GQPKAAPSVTLFPPSSEELQANKATLVCLISDFYPGAVTVAWKADSSPVKAGVETTTPSKQSNNKYAASSYLSLTPEQWKSHKSYSCQVTHEGSTVEKTVAPTECS.

An Ig-like domain is found at 7 to 101; that stretch reads PSVTLFPPSS…EGSTVEKTVA (95 aa). Cysteine 28 and cysteine 87 are oxidised to a cystine.

In terms of assembly, immunoglobulins are composed of two identical heavy chains and two identical light chains; disulfide-linked.

It localises to the secreted. It is found in the cell membrane. Its function is as follows. Constant region of immunoglobulin light chains. Immunoglobulins, also known as antibodies, are membrane-bound or secreted glycoproteins produced by B lymphocytes. In the recognition phase of humoral immunity, the membrane-bound immunoglobulins serve as receptors which, upon binding of a specific antigen, trigger the clonal expansion and differentiation of B lymphocytes into immunoglobulins-secreting plasma cells. Secreted immunoglobulins mediate the effector phase of humoral immunity, which results in the elimination of bound antigens. The antigen binding site is formed by the variable domain of one heavy chain, together with that of its associated light chain. Thus, each immunoglobulin has two antigen binding sites with remarkable affinity for a particular antigen. The variable domains are assembled by a process called V-(D)-J rearrangement and can then be subjected to somatic hypermutations which, after exposure to antigen and selection, allow affinity maturation for a particular antigen. This Homo sapiens (Human) protein is Immunoglobulin lambda constant 3.